The primary structure comprises 160 residues: Cytochrome b6-f complex subunit 4 (160 aa).

3 consecutive transmembrane segments (helical) span residues 36–56 (LLYV…GLAV), 95–115 (LLGI…PFIE), and 131–151 (TFFM…IFPI).

Belongs to the cytochrome b family. PetD subfamily. As to quaternary structure, the 4 large subunits of the cytochrome b6-f complex are cytochrome b6, subunit IV (17 kDa polypeptide, PetD), cytochrome f and the Rieske protein, while the 4 small subunits are PetG, PetL, PetM and PetN. The complex functions as a dimer.

Its subcellular location is the cellular thylakoid membrane. Component of the cytochrome b6-f complex, which mediates electron transfer between photosystem II (PSII) and photosystem I (PSI), cyclic electron flow around PSI, and state transitions. This chain is Cytochrome b6-f complex subunit 4, found in Gloeothece citriformis (strain PCC 7424) (Cyanothece sp. (strain PCC 7424)).